The primary structure comprises 1178 residues: DNA-directed RNA polymerase subunit beta' (1178 aa).

Positions 60, 62, 75, and 78 each coordinate Zn(2+). Mg(2+)-binding residues include Asp-450, Asp-452, and Asp-454. Residues Cys-795, Cys-869, Cys-876, and Cys-879 each coordinate Zn(2+).

Belongs to the RNA polymerase beta' chain family. As to quaternary structure, the RNAP catalytic core consists of 2 alpha, 1 beta, 1 beta' and 1 omega subunit. When a sigma factor is associated with the core the holoenzyme is formed, which can initiate transcription. The cofactor is Mg(2+). Zn(2+) is required as a cofactor.

The enzyme catalyses RNA(n) + a ribonucleoside 5'-triphosphate = RNA(n+1) + diphosphate. Its function is as follows. DNA-dependent RNA polymerase catalyzes the transcription of DNA into RNA using the four ribonucleoside triphosphates as substrates. The polypeptide is DNA-directed RNA polymerase subunit beta' (Clostridium beijerinckii (strain ATCC 51743 / NCIMB 8052) (Clostridium acetobutylicum)).